Consider the following 411-residue polypeptide: 1-deoxy-D-xylulose 5-phosphate reductoisomerase (411 aa).

Residues T12, G13, S14, I15, and N127 each coordinate NADPH. K128 lines the 1-deoxy-D-xylulose 5-phosphate pocket. An NADPH-binding site is contributed by E129. Position 153 (D153) interacts with Mn(2+). 1-deoxy-D-xylulose 5-phosphate is bound by residues S154, E155, S189, and H212. Mn(2+) is bound at residue E155. G218 is a binding site for NADPH. 1-deoxy-D-xylulose 5-phosphate-binding residues include S225, N230, K231, and E234. E234 contacts Mn(2+).

It belongs to the DXR family. Requires Mg(2+) as cofactor. It depends on Mn(2+) as a cofactor.

It carries out the reaction 2-C-methyl-D-erythritol 4-phosphate + NADP(+) = 1-deoxy-D-xylulose 5-phosphate + NADPH + H(+). It functions in the pathway isoprenoid biosynthesis; isopentenyl diphosphate biosynthesis via DXP pathway; isopentenyl diphosphate from 1-deoxy-D-xylulose 5-phosphate: step 1/6. Catalyzes the NADPH-dependent rearrangement and reduction of 1-deoxy-D-xylulose-5-phosphate (DXP) to 2-C-methyl-D-erythritol 4-phosphate (MEP). This chain is 1-deoxy-D-xylulose 5-phosphate reductoisomerase, found in Colwellia psychrerythraea (strain 34H / ATCC BAA-681) (Vibrio psychroerythus).